The primary structure comprises 461 residues: MAQQSIIDTVVNLCKRRGLVYPCGEIYGGTRSAWDYGPLGVELKENIKRQWWRSMVTSRPDVVGVDTSVILPRQVWVTSGHVEVFTDPLVESLNTHKRYRADHLLEQYEEKHGHPPVNGLADINDPETGQPGNWTEPKAFSGLLKTFLGPVDDEEGLHYLRPETAQGIFVNFKNVMNTSRMKPPFGIANIGKSFRNEITPGNFIFRTREFEQMEMEFFVKPGEDEEWHQHWIDTRLQWYINLGIKPENLRLYEHPQEKLSHYSKRTVDIEYAFNFANTKWGELEGIANRTDYDLRVHSEGSGEDLSFFDQETNERWIPFVIEPAAGLGRAMMMFLMDAYHEDEAPNSKGGVDKRVVLKLDRRLAPVKVAVLPLSKKDTLTPLAEKLAAELREFWNVDYDTSGAIGRRYRRQDEIGTPFCVTVDFDSLEDNAVTVRERDTMEQVRVPLDELQGYLAQRLIGC.

Substrate contacts are provided by Arg-100 and Glu-163. ATP-binding positions include Arg-195 to Glu-197, Phe-205 to Phe-210, Glu-282 to Leu-283, and Gly-326 to Arg-329. Residue Phe-210–Glu-214 coordinates substrate. Glu-322–Gly-326 lines the substrate pocket.

It belongs to the class-II aminoacyl-tRNA synthetase family. As to quaternary structure, homodimer.

The protein localises to the cytoplasm. The catalysed reaction is tRNA(Gly) + glycine + ATP = glycyl-tRNA(Gly) + AMP + diphosphate. Functionally, catalyzes the attachment of glycine to tRNA(Gly). The chain is Glycine--tRNA ligase from Corynebacterium glutamicum (strain ATCC 13032 / DSM 20300 / JCM 1318 / BCRC 11384 / CCUG 27702 / LMG 3730 / NBRC 12168 / NCIMB 10025 / NRRL B-2784 / 534).